Here is a 205-residue protein sequence, read N- to C-terminus: Cytochrome c biogenesis ATP-binding export protein CcmA 2 (205 aa).

Residues 2–205 (LEARDLYCER…LALTGGGAGL (204 aa)) form the ABC transporter domain. Residue 34–41 (GGNGAGKT) participates in ATP binding.

The protein belongs to the ABC transporter superfamily. CcmA exporter (TC 3.A.1.107) family. The complex is composed of two ATP-binding proteins (CcmA) and two transmembrane proteins (CcmB).

The protein localises to the cell inner membrane. The catalysed reaction is heme b(in) + ATP + H2O = heme b(out) + ADP + phosphate + H(+). Functionally, part of the ABC transporter complex CcmAB involved in the biogenesis of c-type cytochromes; once thought to export heme, this seems not to be the case, but its exact role is uncertain. Responsible for energy coupling to the transport system. The sequence is that of Cytochrome c biogenesis ATP-binding export protein CcmA 2 from Salmonella typhimurium (strain LT2 / SGSC1412 / ATCC 700720).